The chain runs to 476 residues: Variant surface glycoprotein MITAT 1.2 (476 aa).

A signal peptide spans 1–26; sequence MPSNQEARLFLAVLVLAQVLPILVDS. Disulfide bonds link C41/C171 and C149/C213. N-linked (GlcNAc...) asparagine glycosylation occurs at N289. Disordered stretches follow at residues 389-418 and 435-459; these read QKHK…CKSP and EEAK…TGSS. 2 disulfide bridges follow: C407/C419 and C415/C430. Residues 435-449 show a composition bias toward basic and acidic residues; the sequence is EEAKKVADETAKDGK. Over residues 450 to 459 the composition is skewed to low complexity; it reads TGNTNTTGSS. N454 carries N-linked (GlcNAc...) asparagine glycosylation. Residue S459 is the site of GPI-anchor amidated serine attachment. Residues 460-476 constitute a propeptide, removed in mature form; that stretch reads NSFVISKTPLWLAVLLF.

As to quaternary structure, homodimer.

The protein localises to the cell membrane. Functionally, VSG forms a coat on the surface of the parasite. The trypanosome evades the immune response of the host by expressing a series of antigenically distinct VSGs from an estimated 1000 VSG genes. This is Variant surface glycoprotein MITAT 1.2 from Trypanosoma brucei brucei.